Here is a 202-residue protein sequence, read N- to C-terminus: Imidazoleglycerol-phosphate dehydratase (202 aa).

It belongs to the imidazoleglycerol-phosphate dehydratase family.

It is found in the cytoplasm. The catalysed reaction is D-erythro-1-(imidazol-4-yl)glycerol 3-phosphate = 3-(imidazol-4-yl)-2-oxopropyl phosphate + H2O. The protein operates within amino-acid biosynthesis; L-histidine biosynthesis; L-histidine from 5-phospho-alpha-D-ribose 1-diphosphate: step 6/9. The polypeptide is Imidazoleglycerol-phosphate dehydratase (Mycolicibacterium gilvum (strain PYR-GCK) (Mycobacterium gilvum (strain PYR-GCK))).